Reading from the N-terminus, the 514-residue chain is 2-isopropylmalate synthase (514 aa).

The 264-residue stretch at 5–268 folds into the Pyruvate carboxyltransferase domain; the sequence is LIIFDTTLRD…DVGIDTTQIV (264 aa). Positions 14, 202, 204, and 239 each coordinate Mn(2+). The regulatory domain stretch occupies residues 395–514; it reads KFVSLSQRSE…KDDKLNPQRA (120 aa).

Belongs to the alpha-IPM synthase/homocitrate synthase family. LeuA type 1 subfamily. As to quaternary structure, homodimer. Requires Mn(2+) as cofactor.

The protein localises to the cytoplasm. It catalyses the reaction 3-methyl-2-oxobutanoate + acetyl-CoA + H2O = (2S)-2-isopropylmalate + CoA + H(+). The protein operates within amino-acid biosynthesis; L-leucine biosynthesis; L-leucine from 3-methyl-2-oxobutanoate: step 1/4. Its function is as follows. Catalyzes the condensation of the acetyl group of acetyl-CoA with 3-methyl-2-oxobutanoate (2-ketoisovalerate) to form 3-carboxy-3-hydroxy-4-methylpentanoate (2-isopropylmalate). This is 2-isopropylmalate synthase from Burkholderia cenocepacia (strain HI2424).